Reading from the N-terminus, the 334-residue chain is MEGRGGSRGGAMARGGGRGGFGGGRGGFGGGDRGGRGGGRGGFGGGDRGGRGGFGGGRGGRGGFGGGDRGGRGGARGGRGGARGGKPAAGGKPGAKVIVEKHPRHEGVFIVRGKEESLATLNSVPGESVYGEKRVSVGEGEDKKEYRIWNPFRSKIAAGLHRGVDEIHIKPGSKVLYIGAASGTTISHVSDIVGPTGVVYGIELSHRPGRDLIGMAKKRTNVIPIIEDARHPQKYRMLIGMVDVVFADVAQPNQAQIVAQNSAYFLKNEGHFIISIKASCIDSTAPTEVVVQNEITKLKKEKLRPQHLLKTLDPYERNHSLVIGVYRKFGSSEK.

Over residues 1–93 the composition is skewed to gly residues; it reads MEGRGGSRGG…GGKPAAGGKP (93 aa). The interval 1–94 is disordered; it reads MEGRGGSRGG…GKPAAGGKPG (94 aa). S-adenosyl-L-methionine is bound by residues 184–185, 203–204, 228–229, and 248–251; these read TT, EL, DA, and DVAQ.

It belongs to the methyltransferase superfamily. Fibrillarin family. Component of box C/D small nucleolar ribonucleoprotein (snoRNP) particles. It is associated with the U3, U8 and U13 small nuclear RNAs. Part of the small subunit (SSU) processome, composed of more than 70 proteins and the RNA chaperone small nucleolar RNA (snoRNA) U3. By homology to other fibrillarins, some or all of the N-terminal domain arginines are modified to asymmetric dimethylarginine (DMA).

Its subcellular location is the nucleus. It is found in the nucleolus. It catalyses the reaction L-glutaminyl-[histone H2A] + S-adenosyl-L-methionine = N(5)-methyl-L-glutaminyl-[histone H2A] + S-adenosyl-L-homocysteine + H(+). In terms of biological role, S-adenosyl-L-methionine-dependent methyltransferase that has the ability to methylate both RNAs and proteins. Involved in pre-rRNA processing. Utilizes the methyl donor S-adenosyl-L-methionine to catalyze the site-specific 2'-hydroxyl methylation of ribose moieties in pre-ribosomal RNA. Site specificity is provided by a guide RNA that base pairs with the substrate. Methylation occurs at a characteristic distance from the sequence involved in base pairing with the guide RNA. Also acts as a protein methyltransferase by mediating methylation of 'Gln-105' of histone H2A (H2AQ105me), a modification that impairs binding of the FACT complex and is specifically present at 35S ribosomal DNA locus. Part of the small subunit (SSU) processome, first precursor of the small eukaryotic ribosomal subunit. During the assembly of the SSU processome in the nucleolus, many ribosome biogenesis factors, an RNA chaperone and ribosomal proteins associate with the nascent pre-rRNA and work in concert to generate RNA folding, modifications, rearrangements and cleavage as well as targeted degradation of pre-ribosomal RNA by the RNA exosome. This Dictyostelium discoideum (Social amoeba) protein is rRNA 2'-O-methyltransferase fibrillarin (fbl).